Consider the following 800-residue polypeptide: Ribosome-releasing factor 2, mitochondrial (800 aa).

One can recognise a tr-type G domain in the interval 21–307 (SKVRNIGIIA…AIANYLPSPS (287 aa)). Residues 30–37 (AHIDAGKT), 95–99 (DTPGH), and 147–150 (NKMD) each bind GTP.

This sequence belongs to the TRAFAC class translation factor GTPase superfamily. Classic translation factor GTPase family. EF-G/EF-2 subfamily.

It is found in the mitochondrion. In terms of biological role, mitochondrial GTPase that mediates the disassembly of ribosomes from messenger RNA at the termination of mitochondrial protein biosynthesis. Not involved in the GTP-dependent ribosomal translocation step during translation elongation. This Kluyveromyces lactis (strain ATCC 8585 / CBS 2359 / DSM 70799 / NBRC 1267 / NRRL Y-1140 / WM37) (Yeast) protein is Ribosome-releasing factor 2, mitochondrial.